An 85-amino-acid polypeptide reads, in one-letter code: N.vectensis toxin 1 4 (85 aa).

The first 20 residues, 1–20 (MASFKIVIVCLALLVAVASA), serve as a signal peptide directing secretion. Residues 21–36 (RRRDMMSDDELDYHYS) constitute a propeptide that is removed on maturation. Cystine bridges form between Cys42–Cys82, Cys44–Cys72, and Cys65–Cys83.

The protein belongs to the sea anemone sodium channel inhibitory toxin family. Type II subfamily. In terms of tissue distribution, expressed in ectodermal glands and in clumps outside of the extodermal layer. Is not expressed in nematocytes. In adult female tissues, shows similar expression levels in mesenteries (gametes-producing tissue), tentacles, pharynx and physa.

The protein resides in the secreted. Binds to site 3 of voltage-gated sodium channels and inhibits the inactivation process. Is highly active on DmNav1/TipE (drosophila) and is only extremely weakly active on rat Nav1.4-beta-1/SCN4A-SCN1B, and on human Nav1.5-beta-1/SCN5A-beta-1. This reveals high specificity for arthropod over mammalian channels. In vivo, when released into the medium, this recombinant toxin induces impaired swimming, paralysis and death of the crustacean A.nauplii within several hours. Also causes paralysis of cherry shrimps immediately after injection at very low doses. Its effect on zebrafish (D.rerio) larvae is also rapid, since it induces tail twitching accompanied by impaired swimming after 20 minutes and complete paralysis within 45 minutes. It has also been observed to cause death of zebrafish larvae within 1 hour. The sequence is that of N.vectensis toxin 1 4 from Nematostella vectensis (Starlet sea anemone).